The sequence spans 156 residues: Small ribosomal subunit protein uS7 (156 aa).

Belongs to the universal ribosomal protein uS7 family. As to quaternary structure, part of the 30S ribosomal subunit. Contacts proteins S9 and S11.

Functionally, one of the primary rRNA binding proteins, it binds directly to 16S rRNA where it nucleates assembly of the head domain of the 30S subunit. Is located at the subunit interface close to the decoding center, probably blocks exit of the E-site tRNA. In Picosynechococcus sp. (strain ATCC 27264 / PCC 7002 / PR-6) (Agmenellum quadruplicatum), this protein is Small ribosomal subunit protein uS7.